Reading from the N-terminus, the 418-residue chain is Serine/threonine-protein kinase PCRK1 (418 aa).

The tract at residues 36–63 (GSEFNSRDVSGTSTESSMGRKNSYPPVS) is disordered. In terms of domain architecture, Protein kinase spans 84-369 (FSRSVMIGEG…EVLEMVNKIV (286 aa)). Residues 90 to 98 (IGEGGFGCV) and Lys118 each bind ATP. The active-site Proton acceptor is the Asp218. Residues Ser373, Ser377, and Ser385 each carry the phosphoserine modification.

This sequence belongs to the protein kinase superfamily. Ser/Thr protein kinase family. As to quaternary structure, interacts with FLS2.

The protein resides in the cell membrane. The enzyme catalyses L-seryl-[protein] + ATP = O-phospho-L-seryl-[protein] + ADP + H(+). It carries out the reaction L-threonyl-[protein] + ATP = O-phospho-L-threonyl-[protein] + ADP + H(+). Involved in the activation of early immune responses. Plays a role in pattern-triggered immunity (PTI) induced by pathogen-associated molecular patterns (PAMPs) and damage-associated molecular patterns (DAMPs). Contributes to PTI in response to the bacterial pathogen Pseudomonas syringae pv maculicola strain ES4326. Contributes to PTI in response to the bacterial pathogen Pseudomonas syringae pv tomato strain DC3000. Functions redundantly with PCRK2 in basal resistance against bacterial pathogens and in regulation of plant immunity. Functions together with PCRK2 downstream of the PAMP receptor FLS2. Contributes to the induction of SARD1 and CBP60G, which are transcriptional activator of ICS1, an enzyme involved in salicylate (SA) biosynthesis upon pathogen attack. In Arabidopsis thaliana (Mouse-ear cress), this protein is Serine/threonine-protein kinase PCRK1.